Consider the following 326-residue polypeptide: Palmitoyltransferase SWF1 (326 aa).

Residue Met1 is a topological domain, lumenal. The chain crosses the membrane as a helical span at residues 2-22 (MGALCALAVTQAGLILAAPAL). The Cytoplasmic portion of the chain corresponds to 23–49 (RAYWPFSWYYHVVFRTVLQDTQRHRWK). Residues 50–70 (YWATPAFYAGVYAYCVWLFYG) traverse the membrane as a helical segment. Residues 71–85 (EVYAEIAKALWVPER) are Lumenal-facing. The helical transmembrane segment at 86–106 (WVLPAAVVAPAAAGVAAAATP) threads the bilayer. Topologically, residues 107 to 164 (AAVPADAAYDGLLFHDGVECRTCRVRKPARSRHCGVCGRCVPLADHHCVWLNNCVGRG) are cytoplasmic. The region spanning 124–174 (VECRTCRVRKPARSRHCGVCGRCVPLADHHCVWLNNCVGRGNYGLFYLALG) is the DHHC domain. The chain crosses the membrane as a helical span at residues 165 to 185 (NYGLFYLALGAHCALLTYGAV). Topologically, residues 186-198 (RLPLAAPAGRWPR) are lumenal. The chain crosses the membrane as a helical span at residues 199-219 (ALLALELLVASFAVLCVWFTA). Residues 220-326 (TQVALVRDGM…RIFRRRVRGL (107 aa)) are Cytoplasmic-facing.

The protein belongs to the DHHC palmitoyltransferase family. SWF1 subfamily.

It localises to the endoplasmic reticulum membrane. It carries out the reaction L-cysteinyl-[protein] + hexadecanoyl-CoA = S-hexadecanoyl-L-cysteinyl-[protein] + CoA. Palmitoyltransferase that targets several endosomal SNAREs. Palmitoylates the SNAREs at cysteine residues close to the cytoplasmic end of their transmembrane domain. May have a role in the cellular quality control of transmembrane domain-containing proteins. The polypeptide is Palmitoyltransferase SWF1 (SWF1) (Eremothecium gossypii (strain ATCC 10895 / CBS 109.51 / FGSC 9923 / NRRL Y-1056) (Yeast)).